Consider the following 301-residue polypeptide: Probable alpha-L-glutamate ligase (301 aa).

Residues 104-287 (LQLLSRRGVG…IASQIIAFIE (184 aa)) enclose the ATP-grasp domain. ATP-binding positions include Lys-141, 178–179 (EF), Asp-187, and 211–213 (RSN). Mg(2+) is bound by residues Asp-248, Glu-260, and Asn-262. Positions 248, 260, and 262 each coordinate Mn(2+).

It belongs to the RimK family. Mg(2+) serves as cofactor. The cofactor is Mn(2+).

In Hydrogenovibrio crunogenus (strain DSM 25203 / XCL-2) (Thiomicrospira crunogena), this protein is Probable alpha-L-glutamate ligase.